Here is a 230-residue protein sequence, read N- to C-terminus: Leucyl/phenylalanyl-tRNA--protein transferase (230 aa).

Belongs to the L/F-transferase family.

It is found in the cytoplasm. It carries out the reaction N-terminal L-lysyl-[protein] + L-leucyl-tRNA(Leu) = N-terminal L-leucyl-L-lysyl-[protein] + tRNA(Leu) + H(+). The catalysed reaction is N-terminal L-arginyl-[protein] + L-leucyl-tRNA(Leu) = N-terminal L-leucyl-L-arginyl-[protein] + tRNA(Leu) + H(+). The enzyme catalyses L-phenylalanyl-tRNA(Phe) + an N-terminal L-alpha-aminoacyl-[protein] = an N-terminal L-phenylalanyl-L-alpha-aminoacyl-[protein] + tRNA(Phe). Functionally, functions in the N-end rule pathway of protein degradation where it conjugates Leu, Phe and, less efficiently, Met from aminoacyl-tRNAs to the N-termini of proteins containing an N-terminal arginine or lysine. This chain is Leucyl/phenylalanyl-tRNA--protein transferase, found in Erwinia tasmaniensis (strain DSM 17950 / CFBP 7177 / CIP 109463 / NCPPB 4357 / Et1/99).